A 194-amino-acid polypeptide reads, in one-letter code: Holliday junction branch migration complex subunit RuvA (194 aa).

Residues 1-64 form a domain I region; it reads MISRLTGKLV…EDAHLLFGFA (64 aa). Positions 65-143 are domain II; the sequence is TAEERKTFRQ…AHTVTDGLFA (79 aa). The tract at residues 144–147 is flexible linker; sequence AAPA. A domain III region spans residues 147 to 194; that stretch reads AADETEDIVSTLLALGYSEREAKAAVKGVPEGTDVGEGVRLALKNLLK.

This sequence belongs to the RuvA family. As to quaternary structure, homotetramer. Forms an RuvA(8)-RuvB(12)-Holliday junction (HJ) complex. HJ DNA is sandwiched between 2 RuvA tetramers; dsDNA enters through RuvA and exits via RuvB. An RuvB hexamer assembles on each DNA strand where it exits the tetramer. Each RuvB hexamer is contacted by two RuvA subunits (via domain III) on 2 adjacent RuvB subunits; this complex drives branch migration. In the full resolvosome a probable DNA-RuvA(4)-RuvB(12)-RuvC(2) complex forms which resolves the HJ.

Its subcellular location is the cytoplasm. In terms of biological role, the RuvA-RuvB-RuvC complex processes Holliday junction (HJ) DNA during genetic recombination and DNA repair, while the RuvA-RuvB complex plays an important role in the rescue of blocked DNA replication forks via replication fork reversal (RFR). RuvA specifically binds to HJ cruciform DNA, conferring on it an open structure. The RuvB hexamer acts as an ATP-dependent pump, pulling dsDNA into and through the RuvAB complex. HJ branch migration allows RuvC to scan DNA until it finds its consensus sequence, where it cleaves and resolves the cruciform DNA. This Neisseria meningitidis serogroup B (strain ATCC BAA-335 / MC58) protein is Holliday junction branch migration complex subunit RuvA.